A 323-amino-acid chain; its full sequence is NADH-ubiquinone oxidoreductase chain 1 (323 aa).

8 consecutive transmembrane segments (helical) span residues 8–28 (LINPLLYMIPILLAVAFLTLI), 75–95 (MFLIAPTMALALAMSIWAPLP), 105–125 (LGILFILALSSLAVYTILGSG), 151–171 (LGLILLCMIMLAGGFTYTTLM), 177–197 (MWLIIPGWPMAAMWYISTLAE), 234–254 (ANILMMNTLSYLILFLGSSFM), 258–278 (ELTTISLMIKSSILSMIFLWV), and 298–318 (FLPITLAMTLWHISLPISMLG).

This sequence belongs to the complex I subunit 1 family. Core subunit of respiratory chain NADH dehydrogenase (Complex I) which is composed of 45 different subunits.

It localises to the mitochondrion inner membrane. The catalysed reaction is a ubiquinone + NADH + 5 H(+)(in) = a ubiquinol + NAD(+) + 4 H(+)(out). Core subunit of the mitochondrial membrane respiratory chain NADH dehydrogenase (Complex I) which catalyzes electron transfer from NADH through the respiratory chain, using ubiquinone as an electron acceptor. Essential for the catalytic activity and assembly of complex I. In Xenopus laevis (African clawed frog), this protein is NADH-ubiquinone oxidoreductase chain 1 (mt-nd1).